Consider the following 534-residue polypeptide: Zinc finger protein 671 (534 aa).

The 72-residue stretch at 49 to 120 (VVFEDVFVYF…DQVDMTSATE (72 aa)) folds into the KRAB domain. A C2H2-type 1; degenerate zinc finger spans residues 192-214 (YLCGACGKQFWFSTDFDQHQNQP). 9 C2H2-type zinc fingers span residues 285–307 (HRCG…QRIH), 313–335 (YECN…QTVH), 341–363 (YECS…RRVH), 369–391 (YQCG…QEVH), 397–419 (YVCS…QRTH), 425–447 (YECS…WRIH), 451–473 (YECS…QKVH), 479–501 (YECS…WKVH), and 507–529 (YVCS…QRVH).

The protein belongs to the krueppel C2H2-type zinc-finger protein family.

It is found in the nucleus. In terms of biological role, may be involved in transcriptional regulation. The polypeptide is Zinc finger protein 671 (ZNF671) (Homo sapiens (Human)).